A 719-amino-acid chain; its full sequence is Phenylalanine--tRNA ligase beta subunit, chloroplastic (719 aa).

Residues 318–403 form the B5 domain; that stretch reads DHALNINLSI…RIYGYHKFRS (86 aa). Asp-381, Asp-387, Glu-390, and Glu-391 together coordinate Mg(2+). The 94-residue stretch at 625–718 folds into the FDX-ACB domain; the sequence is SKYPSIIRDL…IVKQLNLKIR (94 aa).

Belongs to the phenylalanyl-tRNA synthetase beta subunit family. Type 1 subfamily. As to quaternary structure, tetramer of two alpha and two beta subunits. The cofactor is Mg(2+).

It localises to the plastid. The protein resides in the chloroplast. It carries out the reaction tRNA(Phe) + L-phenylalanine + ATP = L-phenylalanyl-tRNA(Phe) + AMP + diphosphate + H(+). The protein is Phenylalanine--tRNA ligase beta subunit, chloroplastic of Pyropia yezoensis (Susabi-nori).